Here is a 361-residue protein sequence, read N- to C-terminus: Mitogen-activated protein kinase 14B (361 aa).

One can recognise a Protein kinase domain in the interval Y25 to F309. ATP-binding positions include V31–V39 and K54. D151 serves as the catalytic Proton acceptor. T181 is modified (phosphothreonine; by MAP2K6). The short motif at T181–Y183 is the TXY element. The residue at position 183 (Y183) is a Phosphotyrosine; by MAP2K6.

It belongs to the protein kinase superfamily. CMGC Ser/Thr protein kinase family. MAP kinase subfamily. Mg(2+) serves as cofactor. Dually phosphorylated on Thr-181 and Tyr-183, which activates the enzyme. In terms of tissue distribution, predominantly expressed in the ovary. Lower levels present in brain, gill, heart, spleen, kidney, muscle and gut.

It localises to the cytoplasm. Its subcellular location is the nucleus. The catalysed reaction is L-seryl-[protein] + ATP = O-phospho-L-seryl-[protein] + ADP + H(+). It catalyses the reaction L-threonyl-[protein] + ATP = O-phospho-L-threonyl-[protein] + ADP + H(+). Activated by threonine and tyrosine phosphorylation by the dual specificity kinase, MKK6. Its function is as follows. Serine/threonine kinase which acts as an essential component of the MAP kinase signal transduction pathway. Mapk14b is one of the four p38 MAPKs which play an important role in the cascades of cellular responses evoked by extracellular stimuli such as pro-inflammatory cytokines or physical stress leading to direct activation of transcription factors. Accordingly, p38 MAPKs phosphorylate a broad range of proteins and it has been estimated that they may have approximately 200 to 300 substrates each. Some of the targets are downstream kinases which are activated through phosphorylation and further phosphorylate additional targets. This chain is Mitogen-activated protein kinase 14B (mapk14b), found in Cyprinus carpio (Common carp).